We begin with the raw amino-acid sequence, 264 residues long: MTHTPQSGTAYRARLEARAGRLAGPTANLAPGHVQANLAILPADVAGDFLRFCQRNPKPCPLLAVSEPGDPALPSLGHDIDVRSDIPRYRVWRDGQLAGEPTDVRDLWRDDLVAFLIGCSFSFEEAMLDNGLPVRHIEQGCNVPMYRTSIPTEPAGPFRGPLVVSMRPLKAADAIRAIQVTSRFPSVHGAPVHLGDPAQIGIADINRPDYGDAVEIRPGEIPVFWACGVTPQSVVAAVRPKFCITHAPGHMLVTDLLNSRMAVL.

This sequence belongs to the D-glutamate cyclase family.

This Bordetella petrii (strain ATCC BAA-461 / DSM 12804 / CCUG 43448) protein is Putative hydro-lyase Bpet2233.